Consider the following 134-residue polypeptide: Cytochrome b (134 aa).

Helical transmembrane passes span 33 to 53 (FGSLLGVCLGVQILTGLFLAM), 77 to 98 (WLLRYLHANGASMFFICLYLHV), and 113 to 133 (WNIGILLLFAVMATDFMGYVL). Heme b-binding residues include H83 and H97.

This sequence belongs to the cytochrome b family. The cytochrome bc1 complex contains 11 subunits: 3 respiratory subunits (MT-CYB, CYC1 and UQCRFS1), 2 core proteins (UQCRC1 and UQCRC2) and 6 low-molecular weight proteins (UQCRH/QCR6, UQCRB/QCR7, UQCRQ/QCR8, UQCR10/QCR9, UQCR11/QCR10 and a cleavage product of UQCRFS1). This cytochrome bc1 complex then forms a dimer. Requires heme b as cofactor.

It localises to the mitochondrion inner membrane. Functionally, component of the ubiquinol-cytochrome c reductase complex (complex III or cytochrome b-c1 complex) that is part of the mitochondrial respiratory chain. The b-c1 complex mediates electron transfer from ubiquinol to cytochrome c. Contributes to the generation of a proton gradient across the mitochondrial membrane that is then used for ATP synthesis. The polypeptide is Cytochrome b (MT-CYB) (Sturnira tildae (Tilda's yellow-shouldered bat)).